A 110-amino-acid chain; its full sequence is UPF0060 membrane protein Swit_0423 (110 aa).

A run of 4 helical transmembrane segments spans residues 6-26 (LFIFVAAALCEIGGCFAFWAW), 29-49 (LGKSPLWAVGGVGLLILFAWL), 61-81 (AFAAYGGIYICASLGWMWAVE), and 90-110 (LIGVLLCAVGSAVILLGPRTA).

This sequence belongs to the UPF0060 family.

It is found in the cell inner membrane. The protein is UPF0060 membrane protein Swit_0423 of Rhizorhabdus wittichii (strain DSM 6014 / CCUG 31198 / JCM 15750 / NBRC 105917 / EY 4224 / RW1) (Sphingomonas wittichii).